We begin with the raw amino-acid sequence, 426 residues long: Histidine--tRNA ligase (426 aa).

This sequence belongs to the class-II aminoacyl-tRNA synthetase family. Homodimer.

The protein resides in the cytoplasm. The enzyme catalyses tRNA(His) + L-histidine + ATP = L-histidyl-tRNA(His) + AMP + diphosphate + H(+). In Geobacillus thermodenitrificans (strain NG80-2), this protein is Histidine--tRNA ligase.